The chain runs to 175 residues: NADH-ubiquinone oxidoreductase chain 6 (175 aa).

5 helical membrane passes run 1–21 (MMTYIVFILSVIFVIGFVGFS), 25–45 (SPIYGGLVLIVSGGVGCGIIM), 47–67 (FGGSFLGLMVFLIYLGGMLVV), 88–108 (TVMGVFLLGLLMEVMLVLYVL), and 149–169 (YGAWVVVVTGWSLLVGVLVIL).

This sequence belongs to the complex I subunit 6 family. In terms of assembly, core subunit of respiratory chain NADH dehydrogenase (Complex I) which is composed of 45 different subunits.

It localises to the mitochondrion inner membrane. The enzyme catalyses a ubiquinone + NADH + 5 H(+)(in) = a ubiquinol + NAD(+) + 4 H(+)(out). Its function is as follows. Core subunit of the mitochondrial membrane respiratory chain NADH dehydrogenase (Complex I) which catalyzes electron transfer from NADH through the respiratory chain, using ubiquinone as an electron acceptor. Essential for the catalytic activity and assembly of complex I. The sequence is that of NADH-ubiquinone oxidoreductase chain 6 (MT-ND6) from Equus asinus (Donkey).